Reading from the N-terminus, the 118-residue chain is MGIMSKILGGGGSRTTEDYVELDLDDFDTARGDAGLSVHIAEIGGQQDVIAIKDAVYDGNLVIADITRHTTSDSTMEHIIDDLRQVAREVDGDIVQKGDDQIVITPTGISISRQKLNG.

An important for localization in a ring-like structure at midcell region spans residues 1 to 12 (MGIMSKILGGGG).

In terms of assembly, homodimer. Does not oligomerize. Interacts with FtsZ2.

The protein resides in the cytoplasm. Functionally, involved in cell division. Probably acts as a membrane anchor for FstZ2, tethering its filaments to the division site. May be involved in septum closure. The polypeptide is Cell division protein SepF (Haloferax volcanii (strain ATCC 29605 / DSM 3757 / JCM 8879 / NBRC 14742 / NCIMB 2012 / VKM B-1768 / DS2) (Halobacterium volcanii)).